Reading from the N-terminus, the 756-residue chain is Transient receptor potential cation channel subfamily V member 2 (756 aa).

The segment at 1 to 45 is disordered; that stretch reads MTSASNPPAFRLETSDGDEEGSAEVNKGKNEPPPMESPFQGEDRN. The required for interaction with SLC50A1 stretch occupies residues 1–385; the sequence is MTSASNPPAF…LLQEKWDRLI (385 aa). Residues 1 to 387 are Cytoplasmic-facing; sequence MTSASNPPAF…QEKWDRLIPR (387 aa). 2 positions are modified to phosphoserine: Ser15 and Ser77. ANK repeat units lie at residues 68 to 110, 111 to 157, 158 to 203, 204 to 239, 240 to 288, and 289 to 315; these read NRFD…TEGS, TGKT…DEFY, RGHS…TCFY, FGEL…ATDS, LGNT…ICNH, and QGLT…REFS. Residues 388–408 form a helical membrane-spanning segment; sequence FFFNFACYLVYMIIFTIVAYH. At 409–428 the chain is on the extracellular side; that stretch reads QPSLEQPAIPSSKATFGDSM. The chain crosses the membrane as a helical span at residues 429–449; sequence LLLGHILILLGGIYLLLGQLW. At 450–455 the chain is on the cytoplasmic side; it reads YFWRRR. A helical membrane pass occupies residues 456–476; sequence LFIWISFMDSYFEILFLVQAL. The Extracellular segment spans residues 477-490; sequence LTVLSQVLRFVETE. The chain crosses the membrane as a helical span at residues 491–511; that stretch reads WYLPLLVSSLVLGWLNLLYYT. The Cytoplasmic portion of the chain corresponds to 512–532; sequence RGFQHTGIYSVMIQKVILRDL. Residues 533–553 form a helical membrane-spanning segment; that stretch reads LRFLLVYLVFLFGFAVALVSL. The tract at residues 559-583 is disordered; that stretch reads SPKAPEDSNTTVTEKPTLGQEEEPV. Asn567 carries N-linked (GlcNAc...) asparagine glycosylation. The segment at residues 568 to 604 is an intramembrane region (pore-forming); it reads TTVTEKPTLGQEEEPVPYGGILDASLELFKFTIGMGE. Residues 617–637 traverse the membrane as a helical segment; the sequence is VLLLLLAYVLLTYVLLLNMLI. The Cytoplasmic portion of the chain corresponds to 638 to 756; the sequence is ALMSETVNSV…HLPLQVLQSH (119 aa). The tract at residues 719–756 is disordered; it reads EDPSGAGITGYKKNPTSKPGKNSASEEDHLPLQVLQSH. The segment covering 732-741 has biased composition (polar residues); it reads NPTSKPGKNS. A phosphoserine mark is found at Ser743 and Ser755.

Belongs to the transient receptor (TC 1.A.4) family. TrpV subfamily. TRPV2 sub-subfamily. In terms of assembly, homotetramer. Interacts with a cAMP-dependent protein kinase type II regulatory subunit (PRKAR2A or PRKAR2B) and ACBD3. Interacts with SLC50A1; the interaction probably occurs intracellularly and depends on TRPV2 N-glycosylation. Post-translationally, N-glycosylated. Phosphorylated by PKA. In terms of tissue distribution, abundantly expressed in spleen, placenta, skeleton muscle, lung and brain.

Its subcellular location is the cell membrane. The protein resides in the cytoplasm. It is found in the melanosome. The catalysed reaction is Ca(2+)(in) = Ca(2+)(out). It carries out the reaction Mg(2+)(in) = Mg(2+)(out). The enzyme catalyses Na(+)(in) = Na(+)(out). It catalyses the reaction K(+)(in) = K(+)(out). Calcium-permeable, non-selective cation channel with an outward rectification. Seems to be regulated, at least in part, by IGF1, PDGF and neuropeptide head activator. May transduce physical stimuli in mast cells. Activated by temperatures higher than 52 degrees Celsius; is not activated by vanilloids and acidic pH. This Mus musculus (Mouse) protein is Transient receptor potential cation channel subfamily V member 2 (Trpv2).